We begin with the raw amino-acid sequence, 279 residues long: MPFSGHVPRKRFGQHWLRDDSILEKILLAADLQEEDRILEIGPGRGALTEKLLESNVKLVHGVELDAELIVGLKQRFAGQSRFTLQEGDALSVSLLPHDGIAANKVVANIPYNITGPLLERLIGRLGRSSEVKYQRLVLLVQKEVAKRILALPGQSSFSAMSVRLQLLAKCQSVCEVHPSSFSPQPKVYSEVIILDPLEKDERLDFLVERRVASIVQIAFLSRRKKLRNTLTKICPLDELEPLAYRQGINLNQRPQELAPMIWVQLARELERWDRSKKK.

Residues His-15, Leu-17, Gly-42, Glu-64, Asp-89, and Asn-109 each contribute to the S-adenosyl-L-methionine site.

This sequence belongs to the class I-like SAM-binding methyltransferase superfamily. rRNA adenine N(6)-methyltransferase family. RsmA subfamily.

The protein resides in the cytoplasm. It catalyses the reaction adenosine(1518)/adenosine(1519) in 16S rRNA + 4 S-adenosyl-L-methionine = N(6)-dimethyladenosine(1518)/N(6)-dimethyladenosine(1519) in 16S rRNA + 4 S-adenosyl-L-homocysteine + 4 H(+). Its function is as follows. Specifically dimethylates two adjacent adenosines (A1518 and A1519) in the loop of a conserved hairpin near the 3'-end of 16S rRNA in the 30S particle. May play a critical role in biogenesis of 30S subunits. The protein is Ribosomal RNA small subunit methyltransferase A of Prochlorococcus marinus (strain SARG / CCMP1375 / SS120).